Consider the following 443-residue polypeptide: Threonine/serine transporter TdcC (443 aa).

A run of 11 helical transmembrane segments spans residues tryptophan 24 to alanine 44, glycine 45 to phenylalanine 65, valine 95 to tyrosine 115, valine 140 to methionine 160, valine 163 to isoleucine 183, isoleucine 207 to isoleucine 227, alanine 259 to serine 279, alanine 319 to leucine 339, leucine 363 to proline 383, isoleucine 385 to proline 405, and serine 423 to methionine 443.

This sequence belongs to the amino acid/polyamine transporter 2 family. SdaC/TdcC subfamily.

The protein localises to the cell inner membrane. It catalyses the reaction L-threonine(in) + H(+)(in) = L-threonine(out) + H(+)(out). The catalysed reaction is L-serine(in) + H(+)(in) = L-serine(out) + H(+)(out). Involved in the import of threonine and serine into the cell, with the concomitant import of a proton (symport system). The sequence is that of Threonine/serine transporter TdcC from Edwardsiella tarda.